Here is a 228-residue protein sequence, read N- to C-terminus: PKHD-type hydroxylase Rmet_0838 (228 aa).

One can recognise a Fe2OG dioxygenase domain in the interval 78-179; the sequence is RVLPPMFNRY…RWASFFWAQS (102 aa). Positions 96, 98, and 160 each coordinate Fe cation. Residue R170 participates in 2-oxoglutarate binding.

The cofactor is Fe(2+). L-ascorbate serves as cofactor.

This is PKHD-type hydroxylase Rmet_0838 from Cupriavidus metallidurans (strain ATCC 43123 / DSM 2839 / NBRC 102507 / CH34) (Ralstonia metallidurans).